A 489-amino-acid polypeptide reads, in one-letter code: Glutamate--tRNA ligase (489 aa).

The 'HIGH' region signature appears at 10 to 20 (PSPTGFLHIGG). The 'KMSKS' region signature appears at 261–265 (KLSKR). Lys264 contributes to the ATP binding site.

Belongs to the class-I aminoacyl-tRNA synthetase family. Glutamate--tRNA ligase type 1 subfamily. As to quaternary structure, monomer.

Its subcellular location is the cytoplasm. It catalyses the reaction tRNA(Glu) + L-glutamate + ATP = L-glutamyl-tRNA(Glu) + AMP + diphosphate. Its function is as follows. Catalyzes the attachment of glutamate to tRNA(Glu) in a two-step reaction: glutamate is first activated by ATP to form Glu-AMP and then transferred to the acceptor end of tRNA(Glu). This is Glutamate--tRNA ligase from Finegoldia magna (strain ATCC 29328 / DSM 20472 / WAL 2508) (Peptostreptococcus magnus).